An 81-amino-acid polypeptide reads, in one-letter code: Small ribosomal subunit protein bS18 (81 aa).

It belongs to the bacterial ribosomal protein bS18 family. Part of the 30S ribosomal subunit. Forms a tight heterodimer with protein bS6.

Binds as a heterodimer with protein bS6 to the central domain of the 16S rRNA, where it helps stabilize the platform of the 30S subunit. This Parvibaculum lavamentivorans (strain DS-1 / DSM 13023 / NCIMB 13966) protein is Small ribosomal subunit protein bS18.